We begin with the raw amino-acid sequence, 392 residues long: Tropomodulin (392 aa).

Disordered stretches follow at residues 1-30, 59-90, and 118-138; these read MSQAKTDYYSEEKTFSAPSANSQQGTQLPS, DLNNDFDPDNSMLPPSQRCRDQTDKEPTGPYK, and QKRGKVYDSDSGRNSEEPENG. Over residues 16 to 29 the composition is skewed to polar residues; sequence SAPSANSQQGTQLP. Basic and acidic residues-rich tracts occupy residues 76 to 90 and 122 to 138; these read RCRDQTDKEPTGPYK and KVYDSDSGRNSEEPENG.

This sequence belongs to the tropomodulin family. Binds to the N-terminus of actin.

Its subcellular location is the cytoplasm. It is found in the cytoskeleton. In terms of biological role, acts as the pointed end capping protein which maintains the length and dynamics of the actin filament. Blocks the elongation and depolymerization of the actin filaments at the pointed end. The polypeptide is Tropomodulin (unc-94) (Caenorhabditis elegans).